The chain runs to 89 residues: Mitochondrial import inner membrane translocase subunit Tim9 (89 aa).

Position 2 is an N-acetylalanine (Ala-2). The Twin CX3C motif motif lies at 28 to 52 (CFLDCVKDFTTREVKPEETTCSEHC). Intrachain disulfides connect Cys-28/Cys-52 and Cys-32/Cys-48.

Belongs to the small Tim family. Heterohexamer; composed of 3 copies of TIMM9 and 3 copies of TIMM10/TIM10A, named soluble 70 kDa complex. The complex forms a 6-bladed alpha-propeller structure and associates with the TIMM22 component of the TIM22 complex. Interacts with multi-pass transmembrane proteins in transit. Also forms a complex composed of TIMM9, TIMM10/TIM10A and FXC1/TIM10B. As to expression, ubiquitous, with highest expression in heart, kidney, liver and skeletal muscle.

It is found in the mitochondrion inner membrane. In terms of biological role, mitochondrial intermembrane chaperone that participates in the import and insertion of multi-pass transmembrane proteins into the mitochondrial inner membrane. May also be required for the transfer of beta-barrel precursors from the TOM complex to the sorting and assembly machinery (SAM complex) of the outer membrane. Acts as a chaperone-like protein that protects the hydrophobic precursors from aggregation and guide them through the mitochondrial intermembrane space. This chain is Mitochondrial import inner membrane translocase subunit Tim9 (TIMM9), found in Homo sapiens (Human).